The chain runs to 472 residues: Eukaryotic translation initiation factor 2 subunit 3B (472 aa).

At Ala-2 the chain carries N-acetylalanine. Ser-16 is modified (phosphoserine). The region spanning 39–248 (QATINIGTIG…IVKKIPVPPR (210 aa)) is the tr-type G domain. The tract at residues 48–55 (GHVAHGKS) is G1. Residue 51-56 (AHGKST) participates in GTP binding. Residues 76–80 (NITIK) are G2. Positions 134 to 137 (DCPG) are G3. Residues 190–193 (NKID) and 225–227 (SAQ) each bind GTP. Positions 190 to 193 (NKID) are G4. Residues 225 to 227 (SAQ) form a G5 region.

The protein belongs to the TRAFAC class translation factor GTPase superfamily. Classic translation factor GTPase family. EIF2G subfamily. As to quaternary structure, eIF2 is a heterotrimer composed of an alpha, a beta and a gamma chain. eIF2 is member of the 43S pre-initiation complex (43S PIC). Specifically expressed in testis at the mRNA level.

It catalyses the reaction GTP + H2O = GDP + phosphate + H(+). In terms of biological role, member of the eIF2 complex that functions in the early steps of protein synthesis by forming a ternary complex with GTP and initiator tRNA. This complex binds to a 40S ribosomal subunit, followed by mRNA binding to form the 43S pre-initiation complex (43S PIC). Junction of the 60S ribosomal subunit to form the 80S initiation complex is preceded by hydrolysis of the GTP bound to eIF2 and release of an eIF2-GDP binary complex. In order for eIF2 to recycle and catalyze another round of initiation, the GDP bound to eIF2 must exchange with GTP by way of a reaction catalyzed by eIF-2B. The sequence is that of Eukaryotic translation initiation factor 2 subunit 3B from Homo sapiens (Human).